A 533-amino-acid polypeptide reads, in one-letter code: Flavin-containing monooxygenase 5 (533 aa).

Arg-5 is subject to Dimethylated arginine. Residues Gly-10–Ser-14, Glu-33, and Leu-41–Trp-42 contribute to the FAD site. Residue Ser-54 is modified to Phosphoserine. Tyr-56 carries the phosphotyrosine modification. Ser-58 bears the Phosphoserine mark. Asn-62–Thr-63 serves as a coordination point for FAD. An NADP(+)-binding site is contributed by Ser-196–Asp-199. The residue at position 280 (Ser-280) is a Phosphoserine. Position 284 is a phosphothreonine (Thr-284). Ser-401 carries the post-translational modification Phosphoserine. A helical membrane pass occupies residues Leu-513–Phe-533.

The protein belongs to the FMO family. FAD is required as a cofactor. As to expression, expressed in liver (at protein level). Expressed in the mucosal epithelium of the gastrointestinal tract.

The protein resides in the microsome membrane. Its subcellular location is the endoplasmic reticulum membrane. The enzyme catalyses N,N-dimethylaniline + NADPH + O2 + H(+) = N,N-dimethylaniline N-oxide + NADP(+) + H2O. It carries out the reaction NADPH + O2 + H(+) = H2O2 + NADP(+). It catalyses the reaction heptan-2-one + NADPH + O2 + H(+) = pentyl acetate + NADP(+) + H2O. The catalysed reaction is octan-3-one + NADPH + O2 + H(+) = pentyl propanoate + NADP(+) + H2O. The enzyme catalyses octan-3-one + NADPH + O2 + H(+) = ethyl hexanoate + NADP(+) + H2O. It carries out the reaction hexan-3-one + NADPH + O2 + H(+) = ethyl butanoate + NADP(+) + H2O. It catalyses the reaction hexan-3-one + NADPH + O2 + H(+) = propyl propanoate + NADP(+) + H2O. The catalysed reaction is heptan-4-one + NADPH + O2 + H(+) = propyl butanoate + NADP(+) + H2O. The enzyme catalyses (2E)-geranial + NADPH + O2 + H(+) = (1E)-2,6-dimethylhepta-1,5-dien-1-yl formate + NADP(+) + H2O. It carries out the reaction sulcatone + NADPH + O2 + H(+) = 4-methylpent-3-en-1-yl acetate + NADP(+) + H2O. In terms of biological role, acts as a Baeyer-Villiger monooxygenase on a broad range of substrates. Catalyzes the insertion of an oxygen atom into a carbon-carbon bond adjacent to a carbonyl, which converts ketones to esters. Active on diverse carbonyl compounds, whereas soft nucleophiles are mostly non- or poorly reactive. In contrast with other forms of FMO it is non- or poorly active on 'classical' substrates such as drugs, pesticides, and dietary components containing soft nucleophilic heteroatoms. Able to oxidize drug molecules bearing a carbonyl group on an aliphatic chain, such as nabumetone and pentoxifylline. Also, in the absence of substrates, shows slow but yet significant NADPH oxidase activity. Acts as a positive modulator of cholesterol biosynthesis as well as glucose homeostasis, promoting metabolic aging via pleiotropic effects. This is Flavin-containing monooxygenase 5 from Mus musculus (Mouse).